The following is a 782-amino-acid chain: General transcription and DNA repair factor IIH helicase/translocase subunit XPB (782 aa).

A compositionally biased stretch (basic and acidic residues) spans 1 to 11; the sequence is MGKRDRADRDK. Disordered regions lie at residues 1 to 51 and 220 to 240; these read MGKR…ESGT and ISKT…DPQG. Positions 6 to 18 match the Nuclear localization signal motif; that stretch reads RADRDKKKSRKRH. Positions 21–30 are enriched in acidic residues; it reads DEEDDEEDAP. The region spanning 327-488 is the Helicase ATP-binding domain; that stretch reads MFGNGRARSG…DLNFLIGPKL (162 aa). Position 340–347 (340–347) interacts with ATP; sequence LPCGAGKS. The DEVH box signature appears at 441 to 444; sequence DEVH. One can recognise a Helicase C-terminal domain in the interval 542–702; it reads RACQFLIKFH…LAGMEEEDLA (161 aa). S686 is subject to Phosphoserine. S751 carries the phosphoserine; by CK2 modification.

The protein belongs to the helicase family. RAD25/XPB subfamily. In terms of assembly, component of the 7-subunit TFIIH core complex composed of XPB/ERCC3, XPD/ERCC2, GTF2H1, GTF2H2, GTF2H3, GTF2H4 and GTF2H5, which is active in NER. The core complex associates with the 3-subunit CDK-activating kinase (CAK) module composed of CCNH/cyclin H, CDK7 and MNAT1 to form the 10-subunit holoenzyme (holo-TFIIH) active in transcription. Interacts with PUF60. Interacts with ATF7IP. Interacts with KAT2A; leading to KAT2A recruitment to promoters and acetylation of histones. Part of TBP-based Pol II pre-initiation complex (PIC), in which Pol II core assembles with general transcription factors and other specific initiation factors including GTF2E1, GTF2E2, GTF2F1, GTF2F2, TCEA1, ERCC2, ERCC3, GTF2H2, GTF2H3, GTF2H4, GTF2H5, GTF2A1, GTF2A2, GTF2B and TBP; this large multi-subunit PIC complex mediates DNA unwinding and targets Pol II core to the transcription start site where the first phosphodiester bond forms. In terms of processing, phosphorylation on Ser-751 by CK2 controls the 5'-excision activity of ERCC1-XPF endonuclease; phosphorylated protein inhibits the excision activity and thus NER. Dephosphorylation reactivates the 5'-excision step. Phosphorylation has no effect on transcription or the 3'-5' helicase activity.

The protein resides in the nucleus. The enzyme catalyses Couples ATP hydrolysis with the unwinding of duplex DNA by translocating in the 3'-5' direction.. The catalysed reaction is ATP + H2O = ADP + phosphate + H(+). Phosphorylation on Ser-751 by CK2 controls the 5'-excision activity of ERCC1-XPF endonuclease; phosphorylated protein inhibits the excision activity and thus NER. ATPase activity is stimulated by TFIIH subunit p52 (GTF2H4). DNA translocase activity by this subunit in TFIIH is stimulated by XPA, ERCC5/XPG and XFP plus ERCC1. In terms of biological role, ATP-dependent 3'-5' DNA helicase/translocase; binds dsDNA rather than ssDNA, unzipping it in a translocase rather than classical helicase activity. Component of the general transcription and DNA repair factor IIH (TFIIH) core complex. When complexed to CDK-activating kinase (CAK), involved in RNA transcription by RNA polymerase II. The ATPase activity of XPB/ERCC3, but not its helicase activity, is required for DNA opening; it may wrap around the damaged DNA wedging it open, causing localized melting and twisting that allows XPD/ERCC2 helicase to anchor. The ATP-dependent helicase activity of XPB/ERCC3 may be required for promoter escape. Also involved in transcription-coupled nucleotide excision repair (NER) of damaged DNA. In NER, TFIIH acts by opening DNA around the lesion to allow the excision of the damaged oligonucleotide and its replacement by a new DNA fragment. The structure of the TFIIH transcription complex differs from the NER-TFIIH complex; large movements by XPD/ERCC2 and XPB/ERCC3 are stabilized by XPA. This chain is General transcription and DNA repair factor IIH helicase/translocase subunit XPB (ERCC3), found in Macaca fascicularis (Crab-eating macaque).